The chain runs to 275 residues: Phosphate import ATP-binding protein PstB 1 (275 aa).

In terms of domain architecture, ABC transporter spans 22–261 (LETQAVSVYY…NRTEKIFNSP (240 aa)). 54–61 (GPSGCGKS) provides a ligand contact to ATP.

It belongs to the ABC transporter superfamily. Phosphate importer (TC 3.A.1.7) family. In terms of assembly, the complex is composed of two ATP-binding proteins (PstB), two transmembrane proteins (PstC and PstA) and a solute-binding protein (PstS).

Its subcellular location is the cell inner membrane. The catalysed reaction is phosphate(out) + ATP + H2O = ADP + 2 phosphate(in) + H(+). In terms of biological role, part of the ABC transporter complex PstSACB involved in phosphate import. Responsible for energy coupling to the transport system. The polypeptide is Phosphate import ATP-binding protein PstB 1 (Synechococcus sp. (strain JA-2-3B'a(2-13)) (Cyanobacteria bacterium Yellowstone B-Prime)).